Reading from the N-terminus, the 209-residue chain is Na(+)-translocating NADH-quinone reductase subunit D (209 aa).

5 helical membrane passes run 42 to 62 (LVMTIAVTLVTAFSNFFISLI), 66 to 86 (IPGSVRIIVQMAIIASLVIVV), 103 to 123 (VFVGLIITNCIVMGRAEAYAM), 131 to 151 (FMDGIGNGLGYGVILILVGFL), and 178 to 198 (NGLFLLAPSAFFIIGLLIWGL).

Belongs to the NqrDE/RnfAE family. In terms of assembly, composed of six subunits; NqrA, NqrB, NqrC, NqrD, NqrE and NqrF.

Its subcellular location is the cell inner membrane. It carries out the reaction a ubiquinone + n Na(+)(in) + NADH + H(+) = a ubiquinol + n Na(+)(out) + NAD(+). Functionally, NQR complex catalyzes the reduction of ubiquinone-1 to ubiquinol by two successive reactions, coupled with the transport of Na(+) ions from the cytoplasm to the periplasm. NqrA to NqrE are probably involved in the second step, the conversion of ubisemiquinone to ubiquinol. The protein is Na(+)-translocating NADH-quinone reductase subunit D of Proteus mirabilis (strain HI4320).